Reading from the N-terminus, the 75-residue chain is Peptide Ctri9610 (75 aa).

The signal sequence occupies residues 1 to 22; the sequence is MNSKYLFVFLILNVIFIDLCQG. Lysine 41 is modified (lysine amide). The propeptide occupies 42–75; that stretch reads GTRRRELGSQYDYLQDFRKRELDLDDLLSKFPDY.

It belongs to the non-disulfide-bridged peptide (NDBP) superfamily. Short antimicrobial peptide (group 4) family. Expressed by the venom gland.

The protein localises to the secreted. The protein is Peptide Ctri9610 of Chaerilus tricostatus (Scorpion).